Reading from the N-terminus, the 343-residue chain is MAYTVEPREHSKNTTLPTVAMPPSPPSSFSASFGPFRYDTKEVNFDHWTSTKEKVVTGPYDYIAAKPGKEVRTLLLACFDEWLQVPPESLEVIGQVVRMLHTASLLIDDIQDNSELRRGKPVAQNIFGTALTINSANYVYFLALEKLNSLKNPNITDIFTEELLRLHRGQAMDLYWRDTLTCPTEEEYFEMVANMTGGLFWLMYRMMNAESSMPIDLLPVVELLGVIFQVLDDYKNLCSREYGKLKGFGEDLTEGKFSFPVIHSIRSNPEDLQLLHVLQQKSSNEHVKLYAIEIMESTGSLEYTKHVVENIVSQIQEIIYSTDEGQGRGKGILDLLHKITRLS.

The span at Met-1–Lys-12 shows a compositional bias: basic and acidic residues. Residues Met-1–Pro-26 are disordered. The isopentenyl diphosphate site is built by Lys-69, Arg-72, and His-101. Positions 108 and 112 each coordinate Mg(2+). Arg-117 provides a ligand contact to dimethylallyl diphosphate. Arg-118 is a binding site for isopentenyl diphosphate. Dimethylallyl diphosphate contacts are provided by Thr-196 and Gln-229. Asp-232 lines the Mg(2+) pocket. Positions 236, 246, and 256 each coordinate dimethylallyl diphosphate.

It belongs to the FPP/GGPP synthase family. The cofactor is Mg(2+).

The enzyme catalyses isopentenyl diphosphate + dimethylallyl diphosphate = (2E)-geranyl diphosphate + diphosphate. It carries out the reaction isopentenyl diphosphate + (2E)-geranyl diphosphate = (2E,6E)-farnesyl diphosphate + diphosphate. It catalyses the reaction isopentenyl diphosphate + (2E,6E)-farnesyl diphosphate = (2E,6E,10E)-geranylgeranyl diphosphate + diphosphate. It functions in the pathway mycotoxin biosynthesis. In terms of biological role, geranylgeranyl pyrophosphate synthase; part of the gene cluster that mediates the biosynthesis of aphidicolin, a specific inhibitor of eukaryotic DNA synthesis and DNA polymerase alpha. The geranylgeranyl pyrophosphate synthase GGS is required for supplying a sufficient amount of geranylgeranyl diphosphate (GGDP), the general precursor of diterpenes. The diterpene synthase ACS then catalyzes the conversion of geranylgeranyl diphosphate to aphidicolan-16-beta-ol via the intermediate syn-copalyldiphosphate (syn-CDP). In addition to aphidicolan-16-beta-ol, the enzyme also produces low levels of amphidicol-15-ene and amphidicol-16-ene. The cytochrome P450 monooxygenase P450-2 then catalyzes the two-step hydroxylation from aphidicolan-16-beta-ol to 3-deoxyaphidicolin via a 17,3-deoxyaphidicolin intermediate. Finally, the cytochrome P450 monooxygenase P450-1 converts 3-deoxyaphidicolin to aphidicolin. This Neocamarosporium betae (Beet black rot fungus) protein is Geranylgeranyl pyrophosphate synthase (GGS).